We begin with the raw amino-acid sequence, 267 residues long: Protein TIFY 7 (267 aa).

One can recognise a Tify domain in the interval 113–148 (SSGSSPQLTIFYGGTISVFNDISPDKAQAIMLCAGN). The Jas signature appears at 220-244 (PQARKASLARFLEKRKERLMSAMPY). Residues 222–229 (ARKASLAR) carry the Nuclear localization signal motif.

It belongs to the TIFY/JAZ family. Homo- and heterodimer. Interacts with MYC2, MYC3, MYC4, COI1, AFPH2/NINJA, TIFY10A/JAZ1, TIFY10B/JAZ2, TIFY6B/JAZ3, TIFY5A/JAZ8, TIFY9/JAZ10 and TIFY3A/JAZ11. Interacts with RHD6 and RSL1. Post-translationally, ubiquitinated. Targeted for degradation by the SCF(COI1) E3 ubiquitin ligase-proteasome pathway during jasmonate signaling.

It localises to the nucleus. Repressor of jasmonate responses. Jasmonoyl-isoleucine (JA-Ile) specifically promotes COI1-TIFY7/JAZ9 interaction. Interacts with and suppresses RHD6 and RSL1 transcription factor activities to negatively regulate jasmonate-stimulated root hair development. The sequence is that of Protein TIFY 7 (TIFY7) from Arabidopsis thaliana (Mouse-ear cress).